The following is a 105-amino-acid chain: Small ribosomal subunit protein uS17 (105 aa).

It belongs to the universal ribosomal protein uS17 family. As to quaternary structure, part of the 30S ribosomal subunit.

Its function is as follows. One of the primary rRNA binding proteins, it binds specifically to the 5'-end of 16S ribosomal RNA. This Thermus aquaticus protein is Small ribosomal subunit protein uS17.